The following is a 127-amino-acid chain: Competence protein ComGF (127 aa).

In terms of assembly, the transformation pili are flexible filaments, consisting mainly of the major pilin ComGC and smaller amounts of the minor pilins, including at least ComGD, ComGF and ComGG. Interacts with ComGD. Interacts with ComGG.

It is found in the cell membrane. The protein localises to the fimbrium. Its function is as follows. Required for formation of the type IV-like pilus (T4P) that plays a role in transformation. Involved in transformation. Transformation pili are dynamically extended and retracted, perhaps thereby promoting DNA uptake and transformation. Required for transformation and DNA binding. The protein is Competence protein ComGF (comGF) of Bacillus subtilis (strain 168).